A 455-amino-acid chain; its full sequence is ATP-dependent protease ATPase subunit HslU (455 aa).

ATP contacts are provided by residues V23, 65–70 (GVGKTE), D266, E333, and R405.

Belongs to the ClpX chaperone family. HslU subfamily. A double ring-shaped homohexamer of HslV is capped on each side by a ring-shaped HslU homohexamer. The assembly of the HslU/HslV complex is dependent on binding of ATP.

It is found in the cytoplasm. Functionally, ATPase subunit of a proteasome-like degradation complex; this subunit has chaperone activity. The binding of ATP and its subsequent hydrolysis by HslU are essential for unfolding of protein substrates subsequently hydrolyzed by HslV. HslU recognizes the N-terminal part of its protein substrates and unfolds these before they are guided to HslV for hydrolysis. This chain is ATP-dependent protease ATPase subunit HslU, found in Xanthomonas oryzae pv. oryzae (strain MAFF 311018).